Here is a 118-residue protein sequence, read N- to C-terminus: Protein MT2260 (118 aa).

Belongs to the HesB/IscA family.

This Mycobacterium tuberculosis (strain CDC 1551 / Oshkosh) protein is Protein MT2260.